The chain runs to 278 residues: Protein D7 (278 aa).

2 CHHC U11-48K-type zinc fingers span residues 6-33 and 40-67; these read LMQCPYDKNHMIRPSRFPYHLVKCRENN and LATCPYNARHRVPKQELDLHMASCEYRV. 8 residues coordinate Zn(2+): C9, H15, H25, C29, C43, H49, H59, and C63. A compositionally biased stretch (polar residues) spans 149–164; the sequence is QVKQNQPEPEPFTSSE. Disordered stretches follow at residues 149-230 and 249-278; these read QVKQ…PKAN and PGGSSAASEPLGVDSFDEWPCLGRQPWVRK. The segment covering 165-175 has biased composition (basic and acidic residues); it reads RNYDPRSKEPP. Residues 188-200 are compositionally biased toward polar residues; that stretch reads ATTNTNPWCRQTG. Basic and acidic residues predominate over residues 214–225; it reads SSDEGPRNKEFP.

It belongs to the UPF0224 (FAM112) family.

The protein resides in the cytoplasm. Functionally, involved in oocyte maturation. It is possible that D7 is required at a certain point in the maturation process and that maturation cannot proceed beyond this point unless a threshold amount of D7 protein is provided. The chain is Protein D7 (d7) from Xenopus laevis (African clawed frog).